Consider the following 706-residue polypeptide: Probable serine/threonine-protein kinase zyg-1 (706 aa).

Positions 13–249 (YSHLKEIGKG…LTQIVLSEFM (237 aa)) constitute a Protein kinase domain. ATP contacts are provided by residues 19-27 (IGKGGFGVV) and K41. Catalysis depends on D131, which acts as the Proton acceptor. Composition is skewed to basic and acidic residues over residues 261 to 290 (SREH…DGRA) and 323 to 336 (FDSE…RDSG). Disordered stretches follow at residues 261–351 (SREH…NRSQ) and 566–632 (SPSS…VAPS). The span at 566–579 (SPSSLMPSGSSQTS) shows a compositional bias: low complexity. Composition is skewed to polar residues over residues 580–592 (RFPF…NQPS) and 603–629 (KPTS…SPSV).

Belongs to the protein kinase superfamily. Ser/Thr protein kinase family. Interacts with sel-10. Post-translationally, probably ubiquitinated by the SCF(sel-10) and SCF(lin-23) E3 ubiquitin ligase complexes, leading to its proteasomal degradation.

It is found in the cytoplasm. The protein localises to the cytoskeleton. Its subcellular location is the microtubule organizing center. It localises to the centrosome. The protein resides in the centriole. The catalysed reaction is L-seryl-[protein] + ATP = O-phospho-L-seryl-[protein] + ADP + H(+). The enzyme catalyses L-threonyl-[protein] + ATP = O-phospho-L-threonyl-[protein] + ADP + H(+). Functionally, protein kinase that plays a central role in centrosome duplication, control of centrosome size, spindle formation and nuclear envelope breakdown during cell divisions. Paternal copy is required to regulate synthesis of daughter centrioles prior to fertilization. Maternal copy regulates centrosome duplication during later cell cycles. Functions upstream of sas-5 and sas-6, and is required for their localization to the centrosome. Its role in nuclear envelope breakdown is mediated by the spindly-like protein spdl-1 and the RZZ complex, which in turn recruits the spindle checkpoint proteins mdf-1 and mdf-2, dynein and dynactin to unattached kinetochores. The polypeptide is Probable serine/threonine-protein kinase zyg-1 (Caenorhabditis elegans).